The sequence spans 406 residues: Dual-specificity RNA methyltransferase RlmN (406 aa).

Catalysis depends on E119, which acts as the Proton acceptor. A Radical SAM core domain is found at 125-370; that stretch reads DKGRGTLCVS…AMVRRTRGDD (246 aa). A disulfide bridge links C132 with C375. Residues C139, C143, and C146 each coordinate [4Fe-4S] cluster. Residues 192 to 193, S224, 246 to 248, and N332 each bind S-adenosyl-L-methionine; these read GE and SLH. C375 functions as the S-methylcysteine intermediate in the catalytic mechanism.

It belongs to the radical SAM superfamily. RlmN family. [4Fe-4S] cluster serves as cofactor.

The protein localises to the cytoplasm. The enzyme catalyses adenosine(2503) in 23S rRNA + 2 reduced [2Fe-2S]-[ferredoxin] + 2 S-adenosyl-L-methionine = 2-methyladenosine(2503) in 23S rRNA + 5'-deoxyadenosine + L-methionine + 2 oxidized [2Fe-2S]-[ferredoxin] + S-adenosyl-L-homocysteine. It carries out the reaction adenosine(37) in tRNA + 2 reduced [2Fe-2S]-[ferredoxin] + 2 S-adenosyl-L-methionine = 2-methyladenosine(37) in tRNA + 5'-deoxyadenosine + L-methionine + 2 oxidized [2Fe-2S]-[ferredoxin] + S-adenosyl-L-homocysteine. Specifically methylates position 2 of adenine 2503 in 23S rRNA and position 2 of adenine 37 in tRNAs. m2A2503 modification seems to play a crucial role in the proofreading step occurring at the peptidyl transferase center and thus would serve to optimize ribosomal fidelity. In Xylella fastidiosa (strain Temecula1 / ATCC 700964), this protein is Dual-specificity RNA methyltransferase RlmN.